We begin with the raw amino-acid sequence, 92 residues long: Small ribosomal subunit protein uS19c (92 aa).

It belongs to the universal ribosomal protein uS19 family.

It localises to the plastid. The protein resides in the chloroplast. Its function is as follows. Protein S19 forms a complex with S13 that binds strongly to the 16S ribosomal RNA. This Rhodomonas salina (Cryptomonas salina) protein is Small ribosomal subunit protein uS19c.